The primary structure comprises 301 residues: Phosphatidylcholine:diacylglycerol cholinephosphotransferase 1 (301 aa).

The tract at residues 1-39 is disordered; that stretch reads MSAAAAETDVSLRRRSNSLNGNHTNGVAIDGTLDNNNRR. The next 5 helical transmembrane spans lie at 88–108, 141–161, 171–191, 202–222, and 255–275; these read HWIP…EYTL, VLAA…VWTW, IAAL…QLPL, FPVG…GSMI, and GHYT…DSLA. Catalysis depends on residues histidine 216, histidine 256, and aspartate 260.

Belongs to the phosphatidylcholine:diacylglycerol cholinephosphotransferase family.

The protein localises to the membrane. The enzyme catalyses 1,2-ditetradecanoyl-sn-glycero-3-phosphocholine + 1,2-di-(9Z-octadecenoyl)-sn-glycerol = 1,2-ditetradecanoyl-sn-glycerol + 1,2-di-(9Z-octadecenoyl)-sn-glycero-3-phosphocholine. Its function is as follows. Functions as a phosphatidylcholine:diacylglycerol cholinephosphotransferase that catalyzes the transfer of the phosphocholine headgroup from phosphatidylcholine (PC) to diacylglycerol, a major reaction for the transfer of 18:1 into phosphatidylcholine for desaturation and also for the reverse transfer of 18:2 and 18:3 into the triacylglycerols synthesis pathway. The chain is Phosphatidylcholine:diacylglycerol cholinephosphotransferase 1 from Arabidopsis thaliana (Mouse-ear cress).